A 222-amino-acid polypeptide reads, in one-letter code: Pyridoxine/pyridoxamine 5'-phosphate oxidase (222 aa).

Residues 69 to 74, 84 to 85, K91, and Q113 each bind FMN; these read RMVLLK and YT. Residue K74 participates in substrate binding. Substrate contacts are provided by Y131, R135, and S139. FMN contacts are provided by residues 148–149 and W193; that span reads QS. 199–201 lines the substrate pocket; it reads RLH. An FMN-binding site is contributed by R203.

The protein belongs to the pyridoxamine 5'-phosphate oxidase family. Homodimer. FMN serves as cofactor.

The enzyme catalyses pyridoxamine 5'-phosphate + O2 + H2O = pyridoxal 5'-phosphate + H2O2 + NH4(+). It carries out the reaction pyridoxine 5'-phosphate + O2 = pyridoxal 5'-phosphate + H2O2. Its pathway is cofactor metabolism; pyridoxal 5'-phosphate salvage; pyridoxal 5'-phosphate from pyridoxamine 5'-phosphate: step 1/1. The protein operates within cofactor metabolism; pyridoxal 5'-phosphate salvage; pyridoxal 5'-phosphate from pyridoxine 5'-phosphate: step 1/1. Catalyzes the oxidation of either pyridoxine 5'-phosphate (PNP) or pyridoxamine 5'-phosphate (PMP) into pyridoxal 5'-phosphate (PLP). The polypeptide is Pyridoxine/pyridoxamine 5'-phosphate oxidase (Maricaulis maris (strain MCS10) (Caulobacter maris)).